A 739-amino-acid polypeptide reads, in one-letter code: Sulfate transporter (739 aa).

The interval 1–27 (MSSESKEQHNVSPRDSAEGNDSYPSGI) is disordered. Serine 12 and serine 16 each carry phosphoserine. Transmembrane regions (helical) follow at residues 112–132 (VMSG…YSLL) and 137–157 (PVYG…LGTS). 2 N-linked (GlcNAc...) asparagine glycosylation sites follow: asparagine 199 and asparagine 205. Helical transmembrane passes span 219 to 239 (IMVG…MGFF) and 242 to 262 (GFVS…GASF). Residue asparagine 357 is glycosylated (N-linked (GlcNAc...) asparagine). The next 4 membrane-spanning stretches (helical) occupy residues 378 to 398 (LIPS…AITV), 420 to 440 (AIGF…SAAL), 455 to 475 (LSGV…APLF), and 524 to 544 (LLST…CVIL). The STAS domain maps to 568–719 (AYKNLQIKPG…YSVYEAMAFA (152 aa)).

It belongs to the SLC26A/SulP transporter (TC 2.A.53) family. N-glycosylated. Ubiquitously expressed.

It is found in the cell membrane. Its subcellular location is the apical cell membrane. It carries out the reaction oxalate(in) + sulfate(out) = oxalate(out) + sulfate(in). It catalyses the reaction sulfate(out) + 2 chloride(in) = sulfate(in) + 2 chloride(out). The enzyme catalyses oxalate(out) + 2 chloride(in) = oxalate(in) + 2 chloride(out). The catalysed reaction is bromide(in) + chloride(out) = bromide(out) + chloride(in). It carries out the reaction nitrate(in) + chloride(out) = nitrate(out) + chloride(in). It catalyses the reaction iodide(in) + chloride(out) = iodide(out) + chloride(in). An extracellular acidic pH inhibits chloride-sulfate and chloride-oxalate exchange activity whereas an intracellular acidic pH activates chloride-sulfate exchange with no effect on chloride-oxalate exchange activity. Sulfate transporter which mediates sulfate uptake into chondrocytes in order to maintain adequate sulfation of proteoglycans which is needed for cartilage development. Mediates electroneutral anion exchange of sulfate ions for oxalate ions and of sulfate and oxalate ions for chloride ions. Mediates exchange of sulfate and oxalate ions for hydroxyl ions and of chloride ions for bromide, iodide and nitrate ions. The coupling of sulfate transport to both hydroxyl and chloride ions likely serves to ensure transport at both acidic pH when most sulfate uptake is mediated by sulfate-hydroxide exchange and alkaline pH when most sulfate uptake is mediated by sulfate-chloride exchange. Essential for chondrocyte proliferation, differentiation and cell size expansion. This is Sulfate transporter (SLC26A2) from Homo sapiens (Human).